The primary structure comprises 219 residues: Ribose-5-phosphate isomerase A (219 aa).

Residues 28 to 31 (TGST), 81 to 84 (DGAD), and 94 to 97 (KGGG) each bind substrate. The Proton acceptor role is filled by glutamate 103. Position 121 (lysine 121) interacts with substrate.

The protein belongs to the ribose 5-phosphate isomerase family. Homodimer.

The catalysed reaction is aldehydo-D-ribose 5-phosphate = D-ribulose 5-phosphate. Its pathway is carbohydrate degradation; pentose phosphate pathway; D-ribose 5-phosphate from D-ribulose 5-phosphate (non-oxidative stage): step 1/1. In terms of biological role, catalyzes the reversible conversion of ribose-5-phosphate to ribulose 5-phosphate. This Methylibium petroleiphilum (strain ATCC BAA-1232 / LMG 22953 / PM1) protein is Ribose-5-phosphate isomerase A.